The primary structure comprises 61 residues: Photosystem II reaction center protein K (61 aa).

Positions 1-24 (MLNIFSLIWICLNSALYSSGFFFG) are excised as a propeptide. A helical membrane pass occupies residues 36–56 (IIDFMPVIPVFFFLLAFVWQA).

This sequence belongs to the PsbK family. As to quaternary structure, PSII is composed of 1 copy each of membrane proteins PsbA, PsbB, PsbC, PsbD, PsbE, PsbF, PsbH, PsbI, PsbJ, PsbK, PsbL, PsbM, PsbT, PsbX, PsbY, PsbZ, Psb30/Ycf12, at least 3 peripheral proteins of the oxygen-evolving complex and a large number of cofactors. It forms dimeric complexes.

It localises to the plastid. The protein localises to the chloroplast thylakoid membrane. Functionally, one of the components of the core complex of photosystem II (PSII). PSII is a light-driven water:plastoquinone oxidoreductase that uses light energy to abstract electrons from H(2)O, generating O(2) and a proton gradient subsequently used for ATP formation. It consists of a core antenna complex that captures photons, and an electron transfer chain that converts photonic excitation into a charge separation. In Coffea arabica (Arabian coffee), this protein is Photosystem II reaction center protein K.